Consider the following 896-residue polypeptide: DNA mismatch repair protein MutS (896 aa).

618 to 625 (GPNMSGKS) provides a ligand contact to ATP. A compositionally biased stretch (basic and acidic residues) spans 805-825 (GKESTKTGKGENKNISHKTES). The segment at 805–826 (GKESTKTGKGENKNISHKTESD) is disordered.

It belongs to the DNA mismatch repair MutS family.

Its function is as follows. This protein is involved in the repair of mismatches in DNA. It is possible that it carries out the mismatch recognition step. This protein has a weak ATPase activity. The protein is DNA mismatch repair protein MutS of Halothermothrix orenii (strain H 168 / OCM 544 / DSM 9562).